The sequence spans 465 residues: Lactaldehyde dehydrogenase (465 aa).

NAD(+) is bound at residue Gly-220–Gly-225. Active-site residues include Glu-240 and Cys-274.

The protein belongs to the aldehyde dehydrogenase family. Homotetramer.

It carries out the reaction (S)-lactaldehyde + NAD(+) + H2O = (S)-lactate + NADH + 2 H(+). It participates in cofactor biosynthesis; coenzyme F420 biosynthesis. Functionally, involved in F420 biosynthesis through the oxidation of lactaldehyde to lactate. This is Lactaldehyde dehydrogenase from Methanococcus maripaludis (strain C5 / ATCC BAA-1333).